A 357-amino-acid chain; its full sequence is Glutamine synthetase cytosolic isozyme 1-2 (357 aa).

Residues 19–99 (IIAEYIWVGG…VMCDCYTPQG (81 aa)) form the GS beta-grasp domain. The region spanning 106–357 (KRHSAAKIFS…AETTLLWKQN (252 aa)) is the GS catalytic domain.

The protein belongs to the glutamine synthetase family. Homooctamer. As to expression, expressed in roots and at lower levels in leaf blades and spikelets (rice flower).

The protein resides in the cytoplasm. It carries out the reaction L-glutamate + NH4(+) + ATP = L-glutamine + ADP + phosphate + H(+). Its function is as follows. High-affinity glutamine synthetase involved in ammonium assimilation. Plays an important role in the primary assimilation of ammonium taken up by roots. Plays a role in maintaining nitrogen metabolic balance during ammonium assimilation, thus controlling plant growth and development. Reassimilates ammonium generated during lignification within developing tillers, which is probably required for the outgrowth of axillary buds. Required for nitrogen-dependent biosynthesis of cytokinin. Active cytokinin in axillary bud meristem is required for axillary bud outgrowth and necessary for tillering. The sequence is that of Glutamine synthetase cytosolic isozyme 1-2 from Oryza sativa subsp. japonica (Rice).